The chain runs to 149 residues: Ribonuclease H (149 aa).

The region spanning 1-142 (MSDSVELFTD…ADQLANRGVD (142 aa)) is the RNase H type-1 domain. Mg(2+) contacts are provided by aspartate 10, glutamate 48, aspartate 70, and aspartate 134.

Belongs to the RNase H family. Monomer. The cofactor is Mg(2+).

The protein localises to the cytoplasm. It carries out the reaction Endonucleolytic cleavage to 5'-phosphomonoester.. Endonuclease that specifically degrades the RNA of RNA-DNA hybrids. The chain is Ribonuclease H from Pseudomonas savastanoi pv. phaseolicola (strain 1448A / Race 6) (Pseudomonas syringae pv. phaseolicola (strain 1448A / Race 6)).